Reading from the N-terminus, the 494-residue chain is Chromosomal replication initiator protein DnaA (494 aa).

The domain I, interacts with DnaA modulators stretch occupies residues 1-103 (MTNIGGPVVE…LRVEVIVRGM (103 aa)). Residues 103-148 (MKRVSKGVVCRTSAAPVVLEGQTASSFVESYTEPSVKDIEAGVFGS) form a domain II region. The tract at residues 149–371 (PLDSRYTFES…GAFNQLLFRQ (223 aa)) is domain III, AAA+ region. 4 residues coordinate ATP: Gly195, Gly197, Lys198, and Thr199. The interval 372–494 (SFESDLSLER…LKRLIGEQAA (123 aa)) is domain IV, binds dsDNA.

It belongs to the DnaA family. In terms of assembly, oligomerizes as a right-handed, spiral filament on DNA at oriC.

It is found in the cytoplasm. Its function is as follows. Plays an essential role in the initiation and regulation of chromosomal replication. ATP-DnaA binds to the origin of replication (oriC) to initiate formation of the DNA replication initiation complex once per cell cycle. Binds the DnaA box (a 9 base pair repeat at the origin) and separates the double-stranded (ds)DNA. Forms a right-handed helical filament on oriC DNA; dsDNA binds to the exterior of the filament while single-stranded (ss)DNA is stabiized in the filament's interior. The ATP-DnaA-oriC complex binds and stabilizes one strand of the AT-rich DNA unwinding element (DUE), permitting loading of DNA polymerase. After initiation quickly degrades to an ADP-DnaA complex that is not apt for DNA replication. Binds acidic phospholipids. This chain is Chromosomal replication initiator protein DnaA, found in Bartonella quintana (strain Toulouse) (Rochalimaea quintana).